We begin with the raw amino-acid sequence, 291 residues long: Beta-lactamase CTX-M-97 (291 aa).

The first 28 residues, 1-28, serve as a signal peptide directing secretion; that stretch reads MMTQSIGRSMLTVMATLPLLFSSATLHA. S73 functions as the Acyl-ester intermediate in the catalytic mechanism. 237-239 serves as a coordination point for substrate; sequence KTG.

Belongs to the class-A beta-lactamase family.

The catalysed reaction is a beta-lactam + H2O = a substituted beta-amino acid. Is probably capable of hydrolyzing cephalosporins such as ceftriaxone and ceftazidime, thus conferring resistance to these antibiotics. The sequence is that of Beta-lactamase CTX-M-97 (bla) from Escherichia coli.